Reading from the N-terminus, the 159-residue chain is Acetolactate synthase small subunit (159 aa).

The ACT domain occupies Ile5 to Asp79.

This sequence belongs to the acetolactate synthase small subunit family. In terms of assembly, dimer of large and small chains.

It catalyses the reaction 2 pyruvate + H(+) = (2S)-2-acetolactate + CO2. Its pathway is amino-acid biosynthesis; L-isoleucine biosynthesis; L-isoleucine from 2-oxobutanoate: step 1/4. It participates in amino-acid biosynthesis; L-valine biosynthesis; L-valine from pyruvate: step 1/4. The protein is Acetolactate synthase small subunit (ilvH) of Buchnera aphidicola subsp. Baizongia pistaciae (strain Bp).